A 298-amino-acid polypeptide reads, in one-letter code: Small ribosomal subunit protein uS2 (298 aa).

The segment at 240 to 298 (AGENWDTQAPGAGVPGSAFAAASAAAATSWEADGGDWAASSAPPAGESWAETQPTEAKW) is disordered. Over residues 248 to 271 (APGAGVPGSAFAAASAAAATSWEA) the composition is skewed to low complexity. Positions 289 to 298 (AETQPTEAKW) are enriched in polar residues.

Belongs to the universal ribosomal protein uS2 family. Component of the small ribosomal subunit. Mature ribosomes consist of a small (40S) and a large (60S) subunit. The 40S subunit contains about 33 different proteins and 1 molecule of RNA (18S). The 60S subunit contains about 49 different proteins and 3 molecules of RNA (25S, 5.8S and 5S). Interacts with rps21.

The protein resides in the cytoplasm. Functionally, required for the assembly and/or stability of the 40S ribosomal subunit. Required for the processing of the 20S rRNA-precursor to mature 18S rRNA in a late step of the maturation of 40S ribosomal subunits. The chain is Small ribosomal subunit protein uS2 (rps0) from Aspergillus clavatus (strain ATCC 1007 / CBS 513.65 / DSM 816 / NCTC 3887 / NRRL 1 / QM 1276 / 107).